We begin with the raw amino-acid sequence, 231 residues long: Putative 3-methyladenine DNA glycosylase (231 aa).

The protein belongs to the DNA glycosylase MPG family.

In Pseudomonas fluorescens (strain Pf0-1), this protein is Putative 3-methyladenine DNA glycosylase.